Reading from the N-terminus, the 102-residue chain is Citrate lyase acyl carrier protein (102 aa).

Serine 14 carries the post-translational modification O-(phosphoribosyl dephospho-coenzyme A)serine.

This sequence belongs to the CitD family. As to quaternary structure, oligomer with a subunit composition of (alpha,beta,gamma)6.

The protein resides in the cytoplasm. Functionally, covalent carrier of the coenzyme of citrate lyase. The sequence is that of Citrate lyase acyl carrier protein from Streptococcus equi subsp. zooepidemicus (strain MGCS10565).